Consider the following 500-residue polypeptide: 4-aminobutyrate aminotransferase, mitochondrial (500 aa).

Residues 1–28 (MAFLLITRRLACSSQKNLHLFIPGSRYI) constitute a mitochondrion transit peptide. C163 lines the [2Fe-2S] cluster pocket. 164-165 (GS) is a binding site for pyridoxal 5'-phosphate. C166 provides a ligand contact to [2Fe-2S] cluster. Residue R220 coordinates substrate. The residue at position 231 (K231) is an N6-succinyllysine. K252 carries the post-translational modification N6-acetyllysine; alternate. At K252 the chain carries N6-succinyllysine; alternate. Residues K279 and K318 each carry the N6-acetyllysine modification. N6-(pyridoxal phosphate)lysine is present on K357. T381 lines the pyridoxal 5'-phosphate pocket. K413 carries the post-translational modification N6-acetyllysine; alternate. N6-succinyllysine; alternate is present on K413. K452 and K470 each carry N6-acetyllysine.

It belongs to the class-III pyridoxal-phosphate-dependent aminotransferase family. As to quaternary structure, homodimer; disulfide-linked. It depends on pyridoxal 5'-phosphate as a cofactor. [2Fe-2S] cluster serves as cofactor.

The protein resides in the mitochondrion matrix. It carries out the reaction 4-aminobutanoate + 2-oxoglutarate = succinate semialdehyde + L-glutamate. The enzyme catalyses (S)-3-amino-2-methylpropanoate + 2-oxoglutarate = 2-methyl-3-oxopropanoate + L-glutamate. Functionally, catalyzes the conversion of gamma-aminobutyrate and L-beta-aminoisobutyrate to succinate semialdehyde and methylmalonate semialdehyde, respectively. Can also convert delta-aminovalerate and beta-alanine. The chain is 4-aminobutyrate aminotransferase, mitochondrial from Mus musculus (Mouse).